A 161-amino-acid chain; its full sequence is Tropomyosin (161 aa).

Residues 1–161 are a coiled coil; that stretch reads MDKLREKINA…DEVHQALEDL (161 aa). A compositionally biased stretch (basic and acidic residues) spans 40–52; the sequence is EQEYESLSRKSEA. Disordered regions lie at residues 40–65 and 107–134; these read EQEY…EETK and EKMR…DDME.

As to quaternary structure, homodimer.

The protein localises to the cytoplasm. It localises to the cytoskeleton. Its function is as follows. Forms part of the F-actin contractile ring during cytokinesis. This is Tropomyosin (cdc8) from Schizosaccharomyces pombe (strain 972 / ATCC 24843) (Fission yeast).